Consider the following 439-residue polypeptide: Glutamyl-tRNA reductase (439 aa).

Substrate is bound by residues 48 to 51, Ser107, 112 to 114, and Gln118; these read TCNR and EPQ. Cys49 acts as the Nucleophile in catalysis. 187–192 contributes to the NADP(+) binding site; it reads GAGEMA.

This sequence belongs to the glutamyl-tRNA reductase family. As to quaternary structure, homodimer.

It carries out the reaction (S)-4-amino-5-oxopentanoate + tRNA(Glu) + NADP(+) = L-glutamyl-tRNA(Glu) + NADPH + H(+). It functions in the pathway porphyrin-containing compound metabolism; protoporphyrin-IX biosynthesis; 5-aminolevulinate from L-glutamyl-tRNA(Glu): step 1/2. Catalyzes the NADPH-dependent reduction of glutamyl-tRNA(Glu) to glutamate 1-semialdehyde (GSA). This chain is Glutamyl-tRNA reductase, found in Maridesulfovibrio salexigens (strain ATCC 14822 / DSM 2638 / NCIMB 8403 / VKM B-1763) (Desulfovibrio salexigens).